Consider the following 70-residue polypeptide: Kappa-conotoxin-like Sx11.2 (70 aa).

Residues 1–26 (MMFRVTSVGCLLLVIVFLNLVVPTSA) form the signal peptide. Intrachain disulfides connect Cys-27–Cys-41, Cys-34–Cys-46, Cys-40–Cys-50, and Cys-45–Cys-54. 4-carboxyglutamate occurs at positions 30, 35, and 44. Pro-53 carries the post-translational modification 4-hydroxyproline. A Proline amide modification is found at Pro-57. A propeptide spanning residues 61-70 (SKLQEFFRQR) is cleaved from the precursor.

It belongs to the conotoxin I2 superfamily. Expressed by the venom duct.

The protein localises to the secreted. In terms of biological role, modulator of potassium channels, specifically up-modulates the calcium and voltage-gated BK channels, has no effect on single channel conductance, but increases the open probability of BK channels. This Conus striolatus (Cone snail) protein is Kappa-conotoxin-like Sx11.2.